Reading from the N-terminus, the 180-residue chain is 5'(3')-deoxyribonucleotidase (180 aa).

Residue Asp9 is the Nucleophile of the active site. Mg(2+)-binding residues include Asp9, Asp11, and Asp134. Residue Asp11 is the Proton donor of the active site.

The protein belongs to the 5'(3')-deoxyribonucleotidase family. The cofactor is Mg(2+).

Dephosphorylates nucleoside monophosphates such as the 5' and 2'(3')-phosphates of deoxyribonucleotides in vitro. The sequence is that of 5'(3')-deoxyribonucleotidase from Clostridium acetobutylicum (strain ATCC 824 / DSM 792 / JCM 1419 / IAM 19013 / LMG 5710 / NBRC 13948 / NRRL B-527 / VKM B-1787 / 2291 / W).